We begin with the raw amino-acid sequence, 429 residues long: 28S rRNA (cytosine-C(5))-methyltransferase (429 aa).

G2 carries the post-translational modification N-acetylglycine. Position 167 is a phosphoserine (S167). S-adenosyl-L-methionine is bound by residues 234–240 (CAAPGNK), D258, R263, and D305. The Nucleophile role is filled by C359.

The protein belongs to the class I-like SAM-binding methyltransferase superfamily. RsmB/NOP family. In terms of tissue distribution, ubiquitous. Detected in placenta, heart and skeletal muscle.

The protein localises to the nucleus. The protein resides in the nucleolus. It catalyses the reaction cytidine(3782) in 28S rRNA + S-adenosyl-L-methionine = 5-methylcytidine(3782) in 28S rRNA + S-adenosyl-L-homocysteine + H(+). Its function is as follows. S-adenosyl-L-methionine-dependent methyltransferase that specifically methylates the C(5) position of cytosine 3782 (m5C3782) in 28S rRNA. m5C3782 promotes protein translation without affecting ribosome biogenesis and fidelity. Required for corpus callosum and cerebral cortex development. The polypeptide is 28S rRNA (cytosine-C(5))-methyltransferase (Homo sapiens (Human)).